The sequence spans 141 residues: Putative pre-16S rRNA nuclease (141 aa).

This sequence belongs to the YqgF nuclease family.

The protein localises to the cytoplasm. Its function is as follows. Could be a nuclease involved in processing of the 5'-end of pre-16S rRNA. In Syntrophomonas wolfei subsp. wolfei (strain DSM 2245B / Goettingen), this protein is Putative pre-16S rRNA nuclease.